The primary structure comprises 97 residues: Secreted transmembrane peptide 4 (97 aa).

The signal sequence occupies residues 1–33 (MTKNMTKKKMGLMSPNIAAFVLPMLLVLFTISS). An SCOOP motif motif is present at residues 54–67 (IVFTPPSSSCGGSP). The short motif at 60–62 (SSS) is the SxS motif essential for MIK2 binding element. The tract at residues 75-97 (WMPRRPCRRTRPPGTNIPVSQSP) is disordered.

Belongs to the serine rich endogenous peptide (SCOOP) phytocytokine family. In terms of assembly, interacts with MIK2 (via extracellular leucine-rich repeat domain); this interaction triggers the formation of complex between MIK2 and the BAK1/SERK3 and SERK4 coreceptors, and subsequent BAK1 activation by phosphorylation. As to expression, mostly expressed in leaves and stems, and, to a lower extent, in roots, siliques, seeds and flowers.

The protein resides in the cell membrane. The protein localises to the secreted. It localises to the extracellular space. Its subcellular location is the apoplast. Brassicaceae-specific phytocytokine (plant endogenous peptide released into the apoplast) perceived by MIK2 in a BAK1/SERK3 and SERK4 coreceptors-dependent manner, that modulates various physiological and antimicrobial processes including growth prevention and reactive oxygen species (ROS) response regulation. Prevents general growth and development. This chain is Secreted transmembrane peptide 4, found in Arabidopsis thaliana (Mouse-ear cress).